The sequence spans 154 residues: Small heat shock protein IbpB (154 aa).

Residues 26 to 137 (GQEPQGFPPY…QPQRIAIGSA (112 aa)) enclose the sHSP domain.

This sequence belongs to the small heat shock protein (HSP20) family. In terms of assembly, homodimer. Forms homomultimers of about 100-150 subunits at optimal growth temperatures. Conformation changes to oligomers at high temperatures or high ionic concentrations. The decrease in size of the multimers is accompanied by an increase in chaperone activity.

The protein localises to the cytoplasm. In terms of biological role, associates with aggregated proteins, together with IbpA, to stabilize and protect them from irreversible denaturation and extensive proteolysis during heat shock and oxidative stress. Aggregated proteins bound to the IbpAB complex are more efficiently refolded and reactivated by the ATP-dependent chaperone systems ClpB and DnaK/DnaJ/GrpE. Its activity is ATP-independent. This is Small heat shock protein IbpB from Yersinia pseudotuberculosis serotype O:1b (strain IP 31758).